Consider the following 108-residue polypeptide: Nucleoid-associated protein BMASAVP1_A1850 (108 aa).

A disordered region spans residues 84–108 (EATSQEKMSGMTSGLPLPPGFKLPF). The span at 85–95 (ATSQEKMSGMT) shows a compositional bias: polar residues. A compositionally biased stretch (pro residues) spans 99–108 (PLPPGFKLPF).

It belongs to the YbaB/EbfC family. As to quaternary structure, homodimer.

It localises to the cytoplasm. The protein resides in the nucleoid. In terms of biological role, binds to DNA and alters its conformation. May be involved in regulation of gene expression, nucleoid organization and DNA protection. The polypeptide is Nucleoid-associated protein BMASAVP1_A1850 (Burkholderia mallei (strain SAVP1)).